The sequence spans 139 residues: Transcription antitermination protein NusB (139 aa).

It belongs to the NusB family.

In terms of biological role, involved in transcription antitermination. Required for transcription of ribosomal RNA (rRNA) genes. Binds specifically to the boxA antiterminator sequence of the ribosomal RNA (rrn) operons. The chain is Transcription antitermination protein NusB from Sodalis glossinidius (strain morsitans).